A 135-amino-acid polypeptide reads, in one-letter code: Dihydromethanopterin reductase (135 aa).

NADP(+) contacts are provided by residues Ala9, 16 to 21 (LGLNGH), 52 to 54 (PKT), and 93 to 97 (GGIAV).

Homodimer.

It catalyses the reaction 5,6,7,8-tetrahydromethanopterin + NAD(+) = 7,8-dihydromethanopterin + NADH + H(+). It carries out the reaction 5,6,7,8-tetrahydromethanopterin + NADP(+) = 7,8-dihydromethanopterin + NADPH + H(+). It participates in cofactor biosynthesis; 5,6,7,8-tetrahydromethanopterin biosynthesis. Functionally, catalyzes the reduction of dihydromethanopterin (H(2)MPT) to tetrahydromethanopterin (H(4)MPT). Shows preference for NADPH rather than NADH as electron donor. Does not reduce dihydrofolate. The chain is Dihydromethanopterin reductase (dmrA) from Methylorubrum extorquens (strain ATCC 14718 / DSM 1338 / JCM 2805 / NCIMB 9133 / AM1) (Methylobacterium extorquens).